The chain runs to 248 residues: Thioredoxin-like protein AAED1, chloroplastic (248 aa).

The N-terminal 52 residues, 1-52 (MAIALSSSSTITSITLQPKLKTIHGLGTVLPGYSVKSHFRSVSLRRSAVVVS), are a transit peptide targeting the chloroplast. A53 carries the post-translational modification N-acetylalanine.

This sequence belongs to the peroxiredoxin-like PRXL2 family. PRXL2C subfamily.

Its subcellular location is the plastid. It is found in the chloroplast. The protein is Thioredoxin-like protein AAED1, chloroplastic of Arabidopsis thaliana (Mouse-ear cress).